The chain runs to 199 residues: uncharacterized protein (199 aa).

The chain crosses the membrane as a helical span at residues 7–27 (FWFWLILGIIALFIIVKAIVI).

This sequence belongs to the band 7/mec-2 family.

It is found in the membrane. This is an uncharacterized protein from Methanocaldococcus jannaschii (strain ATCC 43067 / DSM 2661 / JAL-1 / JCM 10045 / NBRC 100440) (Methanococcus jannaschii).